The primary structure comprises 76 residues: Protein CsbA (76 aa).

Residues 1–5 (MITKA) are Extracellular-facing. Residues 6-22 (VFALFFPFMLVVLFTRV) form a helical membrane-spanning segment. Residues 23-27 (TFNHY) are Cytoplasmic-facing. A helical membrane pass occupies residues 28–44 (VAIALTAALLFASYLKG). Residues 45–49 (YTETY) are Extracellular-facing. Residues 50-66 (FIVGLDVVSLVAGGLYM) form a helical membrane-spanning segment. Over 67–76 (AKKAAEKKEE) the chain is Cytoplasmic.

It localises to the cell membrane. The chain is Protein CsbA (csbA) from Bacillus subtilis (strain 168).